We begin with the raw amino-acid sequence, 438 residues long: Trigger factor (438 aa).

One can recognise a PPIase FKBP-type domain in the interval 160-231 (SDQVTIEEQG…IMDVKTKQLQ (72 aa)). A disordered region spans residues 407–438 (AQLSGPQAETVAADQGEQQAEGQEESAEKSEE). The span at 418 to 427 (AADQGEQQAE) shows a compositional bias: low complexity.

It belongs to the FKBP-type PPIase family. Tig subfamily.

Its subcellular location is the cytoplasm. It catalyses the reaction [protein]-peptidylproline (omega=180) = [protein]-peptidylproline (omega=0). In terms of biological role, involved in protein export. Acts as a chaperone by maintaining the newly synthesized protein in an open conformation. Functions as a peptidyl-prolyl cis-trans isomerase. The polypeptide is Trigger factor (Deinococcus deserti (strain DSM 17065 / CIP 109153 / LMG 22923 / VCD115)).